The chain runs to 337 residues: Putative carboxypeptidase TP_0688 (337 aa).

Serine 118 (nucleophile) is an active-site residue. Residues glutamate 234 and histidine 302 each act as charge relay system in the active site.

This sequence belongs to the peptidase S66 family.

The polypeptide is Putative carboxypeptidase TP_0688 (Treponema pallidum (strain Nichols)).